The chain runs to 689 residues: Glycine--tRNA ligase beta subunit (689 aa).

This sequence belongs to the class-II aminoacyl-tRNA synthetase family. Tetramer of two alpha and two beta subunits.

It localises to the cytoplasm. The catalysed reaction is tRNA(Gly) + glycine + ATP = glycyl-tRNA(Gly) + AMP + diphosphate. This chain is Glycine--tRNA ligase beta subunit, found in Coxiella burnetii (strain RSA 331 / Henzerling II).